Here is a 485-residue protein sequence, read N- to C-terminus: MSDFDENFIEMTSYWAPPSSPSPRTILAMLEQTDNGLNPISEIFPQESLPRDHTDQSGQRSGLRERLAARVGFNLPTLNTEENMSPLDAFFRSSNVPNSPVVAISPGFSPSALLHTPNMVSDSSQIIPPSSATNYGPLEMVETSGEDNAAMMMFNNDLPYQPYNVDLPSLEVFDDIATEESFYIPSYEPHVDPIGTPLVTSFESELVDDAHTDIISIEDSESEDGNKDDDDEDFQYEDEDEDQYDQDQDVDEDEEEEKDEDNVALDDPQPPPPKRRRYEVSNMIGATRTSKTQRIILQMESDEDNPNDGYRWRKYGQKVVKGNPNPRSYFKCTNIECRVKKHVERGADNIKLVVTTYDGIHNHPSPPARRSNSSSRNRSAGATIPQNQNDRTSRLGRAPPTPTPPTPPPSSYTPEEMRPFSSLATEIDLTEVYMTGISMLPNIPVYENSGFMYQNDEPTMNAMPDGSDVYDGIMERLYFKFGVDM.

2 disordered regions span residues 43 to 62 (IFPQESLPRDHTDQSGQRSG) and 215 to 293 (ISIE…SKTQ). The segment covering 216-264 (SIEDSESEDGNKDDDDEDFQYEDEDEDQYDQDQDVDEDEEEEKDEDNVA) has biased composition (acidic residues). The WRKY DNA-binding region spans 301–366 (SDEDNPNDGY…YDGIHNHPSP (66 aa)). Cys332, Cys337, His361, and His363 together coordinate Zn(2+). Residues 358-417 (DGIHNHPSPPARRSNSSSRNRSAGATIPQNQNDRTSRLGRAPPTPTPPTPPPSSYTPEEM) form a disordered region. The segment covering 368–380 (ARRSNSSSRNRSA) has biased composition (low complexity). Residues 399-411 (PPTPTPPTPPPSS) show a composition bias toward pro residues.

The protein belongs to the WRKY group I family. In terms of assembly, interacts with IKU1. Expressed in male gametophytes (pollen) and in the endosperm of fertilized ovules.

It is found in the nucleus. Transcription factor. Interacts specifically with the W box (5'-(T)TGAC[CT]-3'), a frequently occurring elicitor-responsive cis-acting element. Modulates seed size by negatively regulating the cellularization of syncytial endosperm. This chain is Probable WRKY transcription factor 10 (WRKY10), found in Arabidopsis thaliana (Mouse-ear cress).